The chain runs to 436 residues: Acetyl-CoA decarbonylase/synthase complex subunit delta 1 (436 aa).

This sequence belongs to the CdhD family. In terms of assembly, heterodimer of delta and gamma chains. The ACDS complex is made up of alpha, epsilon, beta, gamma and delta chains with a probable stoichiometry of (alpha(2)epsilon(2))(4)-beta(8)-(gamma(1)delta(1))(8) (Potential).

It functions in the pathway one-carbon metabolism; methanogenesis from acetate. Part of a complex that catalyzes the reversible cleavage of acetyl-CoA, allowing growth on acetate as sole source of carbon and energy. Probably maintains the overall quaternary structure of the ACDS complex. The protein is Acetyl-CoA decarbonylase/synthase complex subunit delta 1 (cdhD1) of Methanosarcina thermophila.